Here is a 461-residue protein sequence, read N- to C-terminus: Photosystem II CP43 reaction center protein (461 aa).

The propeptide occupies 1–2 (ME). Threonine 3 is modified (N-acetylthreonine). Threonine 3 is modified (phosphothreonine). 5 consecutive transmembrane segments (helical) span residues 57–81 (LFEVAHFVPEKPMYEQGLILLPHLA), 122–143 (LLGPETLEESFPFFGYVWKDRN), 166–188 (KALYFGGVYDTWAPGGGDVRKIT), 243–263 (KPFAWARRALVWSGEAYLSYS), and 279–300 (WFNNTAYPSEFYGPTGPEASQA). A [CaMn4O5] cluster-binding site is contributed by glutamate 355. The chain crosses the membrane as a helical span at residues 435–459 (RARAAAAGFEKGIDRDFEPVLSMTP).

Belongs to the PsbB/PsbC family. PsbC subfamily. PSII is composed of 1 copy each of membrane proteins PsbA, PsbB, PsbC, PsbD, PsbE, PsbF, PsbH, PsbI, PsbJ, PsbK, PsbL, PsbM, PsbT, PsbX, PsbY, PsbZ, Psb30/Ycf12, at least 3 peripheral proteins of the oxygen-evolving complex and a large number of cofactors. It forms dimeric complexes. Requires Binds multiple chlorophylls and provides some of the ligands for the Ca-4Mn-5O cluster of the oxygen-evolving complex. It may also provide a ligand for a Cl- that is required for oxygen evolution. PSII binds additional chlorophylls, carotenoids and specific lipids. as cofactor.

Its subcellular location is the plastid. It localises to the chloroplast thylakoid membrane. In terms of biological role, one of the components of the core complex of photosystem II (PSII). It binds chlorophyll and helps catalyze the primary light-induced photochemical processes of PSII. PSII is a light-driven water:plastoquinone oxidoreductase, using light energy to abstract electrons from H(2)O, generating O(2) and a proton gradient subsequently used for ATP formation. The protein is Photosystem II CP43 reaction center protein of Platanus occidentalis (Sycamore).